The chain runs to 242 residues: Adenosine 5'-phosphosulfate reductase (242 aa).

Residues Cys-125, Cys-126, Cys-208, and Cys-211 each coordinate [4Fe-4S] cluster. Cys-234 serves as the catalytic Nucleophile; cysteine thiosulfonate intermediate.

This sequence belongs to the PAPS reductase family. CysH subfamily. Requires [4Fe-4S] cluster as cofactor.

Its subcellular location is the cytoplasm. It carries out the reaction [thioredoxin]-disulfide + sulfite + AMP + 2 H(+) = adenosine 5'-phosphosulfate + [thioredoxin]-dithiol. It participates in sulfur metabolism; hydrogen sulfide biosynthesis; sulfite from sulfate. Its function is as follows. Catalyzes the formation of sulfite from adenosine 5'-phosphosulfate (APS) using thioredoxin as an electron donor. The chain is Adenosine 5'-phosphosulfate reductase from Staphylococcus saprophyticus subsp. saprophyticus (strain ATCC 15305 / DSM 20229 / NCIMB 8711 / NCTC 7292 / S-41).